We begin with the raw amino-acid sequence, 196 residues long: MYDYIKGTLVKITAKHIVIETNGLGYIVTVANPYSFSDQMNQTIQVYLHQVIRDDAHLLFGFHTEDEKEVFLKLISVSGIGPTTALAIVAVDDNQGLVAAIDNSDIKYLMKFPKIGKKTAQQMVLDLAGKFAELPAETTNTTANQTAGNQQLDEAMEALLALGYKSTELKKVKAFFEDTNETAEQYIKSALKMLMK.

A domain I region spans residues M1–H63. Residues T64 to T142 are domain II. The segment at A143–T146 is flexible linker. Positions A147–K196 are domain III.

It belongs to the RuvA family. As to quaternary structure, homotetramer. Forms an RuvA(8)-RuvB(12)-Holliday junction (HJ) complex. HJ DNA is sandwiched between 2 RuvA tetramers; dsDNA enters through RuvA and exits via RuvB. An RuvB hexamer assembles on each DNA strand where it exits the tetramer. Each RuvB hexamer is contacted by two RuvA subunits (via domain III) on 2 adjacent RuvB subunits; this complex drives branch migration. In the full resolvosome a probable DNA-RuvA(4)-RuvB(12)-RuvC(2) complex forms which resolves the HJ.

The protein resides in the cytoplasm. The RuvA-RuvB-RuvC complex processes Holliday junction (HJ) DNA during genetic recombination and DNA repair, while the RuvA-RuvB complex plays an important role in the rescue of blocked DNA replication forks via replication fork reversal (RFR). RuvA specifically binds to HJ cruciform DNA, conferring on it an open structure. The RuvB hexamer acts as an ATP-dependent pump, pulling dsDNA into and through the RuvAB complex. HJ branch migration allows RuvC to scan DNA until it finds its consensus sequence, where it cleaves and resolves the cruciform DNA. The sequence is that of Holliday junction branch migration complex subunit RuvA from Streptococcus thermophilus (strain CNRZ 1066).